The primary structure comprises 336 residues: Phosphate acyltransferase (336 aa).

It belongs to the PlsX family. As to quaternary structure, homodimer. Probably interacts with PlsY.

Its subcellular location is the cytoplasm. The catalysed reaction is a fatty acyl-[ACP] + phosphate = an acyl phosphate + holo-[ACP]. It participates in lipid metabolism; phospholipid metabolism. Catalyzes the reversible formation of acyl-phosphate (acyl-PO(4)) from acyl-[acyl-carrier-protein] (acyl-ACP). This enzyme utilizes acyl-ACP as fatty acyl donor, but not acyl-CoA. The protein is Phosphate acyltransferase of Pseudomonas fluorescens (strain Pf0-1).